A 449-amino-acid polypeptide reads, in one-letter code: UDP-N-acetylglucosamine 1-carboxyvinyltransferase (449 aa).

51–52 (KN) serves as a coordination point for phosphoenolpyruvate. Residue Arg-121 participates in UDP-N-acetyl-alpha-D-glucosamine binding. Cys-145 acts as the Proton donor in catalysis. 2-(S-cysteinyl)pyruvic acid O-phosphothioketal is present on Cys-145. UDP-N-acetyl-alpha-D-glucosamine is bound by residues 150–154 (RPVDQ), Asp-333, and Ile-355.

It belongs to the EPSP synthase family. MurA subfamily.

It localises to the cytoplasm. The enzyme catalyses phosphoenolpyruvate + UDP-N-acetyl-alpha-D-glucosamine = UDP-N-acetyl-3-O-(1-carboxyvinyl)-alpha-D-glucosamine + phosphate. It participates in cell wall biogenesis; peptidoglycan biosynthesis. In terms of biological role, cell wall formation. Adds enolpyruvyl to UDP-N-acetylglucosamine. The protein is UDP-N-acetylglucosamine 1-carboxyvinyltransferase of Burkholderia mallei (strain ATCC 23344).